The primary structure comprises 429 residues: Glutamate-1-semialdehyde 2,1-aminomutase 2 (429 aa).

Residue lysine 268 is modified to N6-(pyridoxal phosphate)lysine.

Belongs to the class-III pyridoxal-phosphate-dependent aminotransferase family. HemL subfamily. As to quaternary structure, homodimer. Pyridoxal 5'-phosphate is required as a cofactor.

The protein resides in the cytoplasm. It catalyses the reaction (S)-4-amino-5-oxopentanoate = 5-aminolevulinate. It functions in the pathway porphyrin-containing compound metabolism; protoporphyrin-IX biosynthesis; 5-aminolevulinate from L-glutamyl-tRNA(Glu): step 2/2. This chain is Glutamate-1-semialdehyde 2,1-aminomutase 2, found in Staphylococcus aureus (strain bovine RF122 / ET3-1).